We begin with the raw amino-acid sequence, 218 residues long: Large ribosomal subunit protein uL3 (218 aa).

A disordered region spans residues 137–157 (GVGASHGAHKNHRKPGSIGGA).

Belongs to the universal ribosomal protein uL3 family. In terms of assembly, part of the 50S ribosomal subunit. Forms a cluster with proteins L14 and L19.

Functionally, one of the primary rRNA binding proteins, it binds directly near the 3'-end of the 23S rRNA, where it nucleates assembly of the 50S subunit. The protein is Large ribosomal subunit protein uL3 of Kocuria rhizophila (strain ATCC 9341 / DSM 348 / NBRC 103217 / DC2201).